The sequence spans 103 residues: N(4)-acetylcytidine amidohydrolase (103 aa).

The ASCH domain maps to 6 to 94; sequence ITFFQRFQDD…IAGIYPDQTQ (89 aa). The active-site Proton acceptor is the Lys-21. Residue Thr-24 is the Nucleophile of the active site. The Proton donor role is filled by Glu-74.

It belongs to the N(4)-acetylcytidine amidohydrolase family.

It carries out the reaction N(4)-acetylcytidine + H2O = cytidine + acetate + H(+). The enzyme catalyses N(4)-acetyl-2'-deoxycytidine + H2O = 2'-deoxycytidine + acetate + H(+). The catalysed reaction is N(4)-acetylcytosine + H2O = cytosine + acetate + H(+). In terms of biological role, catalyzes the hydrolysis of N(4)-acetylcytidine (ac4C). The sequence is that of N(4)-acetylcytidine amidohydrolase from Citrobacter koseri (strain ATCC BAA-895 / CDC 4225-83 / SGSC4696).